Consider the following 33-residue polypeptide: Photosystem II reaction center protein Psb30 (33 aa).

The helical transmembrane segment at 5 to 25 (IVFQLTSLVLILAAGPLVVVL) threads the bilayer.

The protein belongs to the Psb30/Ycf12 family. As to quaternary structure, PSII is composed of 1 copy each of membrane proteins PsbA, PsbB, PsbC, PsbD, PsbE, PsbF, PsbH, PsbI, PsbJ, PsbK, PsbL, PsbM, PsbT, PsbX, PsbY, PsbZ, Psb30/Ycf12, peripheral proteins of the oxygen-evolving complex and a large number of cofactors. It forms dimeric complexes.

It localises to the plastid. The protein localises to the chloroplast thylakoid membrane. Its function is as follows. A core subunit of photosystem II (PSII), probably helps stabilize the reaction center. The chain is Photosystem II reaction center protein Psb30 from Tetradesmus obliquus (Green alga).